A 94-amino-acid polypeptide reads, in one-letter code: Host-modulation protein 11K (94 aa).

As to quaternary structure, interacts with host GRB2; this interaction alters host cell environment by modulating host signaling pathways.

The protein resides in the host cytoplasm. Functionally, enhances viral DNA replication and virion release. Mechansitically, optimizes viral DNA replication by interacting with host GRB2 to inhibit the negative effect of ERK signaling on B19 viral replication. Plays a role in viral infectivity. Induces apoptosis of primary erythroid progenitor cells. This chain is Host-modulation protein 11K (11K), found in Human parvovirus B19 (strain HV) (HPV B19).